Reading from the N-terminus, the 100-residue chain is uncharacterized protein (100 aa).

This is an uncharacterized protein from Clostridium tetanomorphum.